A 445-amino-acid polypeptide reads, in one-letter code: Argininosuccinate synthase (445 aa).

ATP-binding positions include 17–25 and Ala43; that span reads AFSGGLDTS. Tyr99 contributes to the L-citrulline binding site. ATP is bound by residues Gly129 and Thr131. 3 residues coordinate L-aspartate: Thr131, Asn135, and Asp136. Asn135 is an L-citrulline binding site. ATP is bound at residue Asp136. L-citrulline-binding residues include Arg139 and Ser192. Asp194 contacts ATP. Positions 201, 203, and 280 each coordinate L-citrulline.

It belongs to the argininosuccinate synthase family. Type 2 subfamily. Homotetramer.

The protein localises to the cytoplasm. It carries out the reaction L-citrulline + L-aspartate + ATP = 2-(N(omega)-L-arginino)succinate + AMP + diphosphate + H(+). Its pathway is amino-acid biosynthesis; L-arginine biosynthesis; L-arginine from L-ornithine and carbamoyl phosphate: step 2/3. In Burkholderia multivorans (strain ATCC 17616 / 249), this protein is Argininosuccinate synthase (argG).